The sequence spans 411 residues: Heparan-sulfate 6-O-sulfotransferase 1 (411 aa).

Residues 11–17 are Cytoplasmic-facing; it reads MVERASK. The helical; Signal-anchor for type II membrane protein transmembrane segment at 18–37 threads the bilayer; it reads FVLVVAGSVCFMLILYQYAG. The Lumenal segment spans residues 38–411; it reads PGLSLGAPGG…DYMSHIIEKW (374 aa). 93–101 is a 3'-phosphoadenylyl sulfate binding site; sequence HIQKTGGTT. Substrate-binding positions include 123 to 124, Arg140, Trp145, and His150; that span reads KK. His150 acts as the Proton acceptor in catalysis. 3'-phosphoadenylyl sulfate-binding residues include Arg185 and Ser193. Substrate-binding residues include His197 and Trp204. Asn264 is a glycosylation site (N-linked (GlcNAc...) asparagine). 317 to 319 serves as a coordination point for 3'-phosphoadenylyl sulfate; that stretch reads MQY. N-linked (GlcNAc...) asparagine glycosylation occurs at Asn320. 323-324 lines the 3'-phosphoadenylyl sulfate pocket; it reads RA. Residues 352 to 387 are a coiled coil; that stretch reads KDLFQQRYQYKRQLERREQRLRSREERLLHRAKEAL.

It belongs to the sulfotransferase 6 family. Post-translationally, N-glycosylated. As to expression, expressed in fetal brain.

It localises to the membrane. The catalysed reaction is alpha-D-glucosaminyl-[heparan sulfate](n) + 3'-phosphoadenylyl sulfate = 6-sulfo-alpha-D-glucosaminyl-[heparan sulfate](n) + adenosine 3',5'-bisphosphate + H(+). In terms of biological role, 6-O-sulfation enzyme which catalyzes the transfer of sulfate from 3'-phosphoadenosine 5'-phosphosulfate (PAPS) to position 6 of the N-sulfoglucosamine residue (GlcNS) of heparan sulfate. Critical for normal neuronal development where it may play a role in neuron branching. May also play a role in limb development. May prefer iduronic acid. The polypeptide is Heparan-sulfate 6-O-sulfotransferase 1 (Homo sapiens (Human)).